The chain runs to 486 residues: Protein nucleotidyltransferase YdiU (486 aa).

The ATP site is built by Gly-90, Gly-92, Arg-93, Lys-113, Asp-125, Gly-126, Arg-176, and Arg-183. The active-site Proton acceptor is Asp-252. Mg(2+) contacts are provided by Asn-253 and Asp-262. Asp-262 contacts ATP.

It belongs to the SELO family. Mg(2+) serves as cofactor. The cofactor is Mn(2+).

The enzyme catalyses L-seryl-[protein] + ATP = 3-O-(5'-adenylyl)-L-seryl-[protein] + diphosphate. The catalysed reaction is L-threonyl-[protein] + ATP = 3-O-(5'-adenylyl)-L-threonyl-[protein] + diphosphate. It catalyses the reaction L-tyrosyl-[protein] + ATP = O-(5'-adenylyl)-L-tyrosyl-[protein] + diphosphate. It carries out the reaction L-histidyl-[protein] + UTP = N(tele)-(5'-uridylyl)-L-histidyl-[protein] + diphosphate. The enzyme catalyses L-seryl-[protein] + UTP = O-(5'-uridylyl)-L-seryl-[protein] + diphosphate. The catalysed reaction is L-tyrosyl-[protein] + UTP = O-(5'-uridylyl)-L-tyrosyl-[protein] + diphosphate. Nucleotidyltransferase involved in the post-translational modification of proteins. It can catalyze the addition of adenosine monophosphate (AMP) or uridine monophosphate (UMP) to a protein, resulting in modifications known as AMPylation and UMPylation. The protein is Protein nucleotidyltransferase YdiU of Pseudomonas putida (strain ATCC 47054 / DSM 6125 / CFBP 8728 / NCIMB 11950 / KT2440).